We begin with the raw amino-acid sequence, 254 residues long: Type III pantothenate kinase (254 aa).

Aspartate 7–lysine 14 is a binding site for ATP. Substrate-binding positions include tyrosine 96 and glycine 103–arginine 106. Aspartate 105 functions as the Proton acceptor in the catalytic mechanism. Threonine 133 is an ATP binding site. Threonine 183 is a binding site for substrate.

It belongs to the type III pantothenate kinase family. In terms of assembly, homodimer. Requires NH4(+) as cofactor. The cofactor is K(+).

It is found in the cytoplasm. The catalysed reaction is (R)-pantothenate + ATP = (R)-4'-phosphopantothenate + ADP + H(+). The protein operates within cofactor biosynthesis; coenzyme A biosynthesis; CoA from (R)-pantothenate: step 1/5. Its function is as follows. Catalyzes the phosphorylation of pantothenate (Pan), the first step in CoA biosynthesis. The protein is Type III pantothenate kinase of Paracidovorax citrulli (strain AAC00-1) (Acidovorax citrulli).